The following is a 442-amino-acid chain: Citrate transporter CitP (442 aa).

A run of 13 helical transmembrane segments spans residues 27-47 (ISGI…IAIS), 59-79 (IFAL…LPIF), 83-103 (LGGG…TNVI), 114-134 (FING…SSLF), 151-171 (VAFI…VIIG), 177-197 (AILY…IVPL), 209-229 (SAGI…LAII), 267-287 (YVQL…GTML), 293-313 (GINA…FGLL), 321-341 (VIMF…AGVG), 349-369 (VLLA…IVAI), 387-409 (AAIT…VLAA), and 421-441 (MGNR…VTFM).

Belongs to the 2-hydroxycarboxylate transporter (2-HCT) (TC 2.A.24) family.

It localises to the cell membrane. It catalyses the reaction (R)-lactate(in) + citrate(out) = (R)-lactate(out) + citrate(in). The catalysed reaction is (S)-lactate(in) + citrate(out) = (S)-lactate(out) + citrate(in). The enzyme catalyses citrate(in) + H(+)(in) = citrate(out) + H(+)(out). With respect to regulation, the transport of citrate is unaffected by the presence of citrate in the growth media. Its function is as follows. Secondary transporter involved in citrate metabolism. During cometabolism of citrate and glucose, catalyzes the uptake of divalent citrate into the cell coupled to the exit of monovalent lactate, the end product of glycolysis in L.lactis. The citrate/lactate exchange is electrogenic and results in the generation of a membrane potential. Plays an important role in resistance against lactate toxicity at low pH. In the absence of glucose, i.e. when no lactate is produced, CitP catalyzes the uptake of citrate in exchange with the citrate metabolism intermediates pyruvate and alpha-acetolactate, and the end product acetate. In the absence of glucose, CitP can also catalyze the proton-dependent transport of citrate. In vitro, shows a broad substrate specificity. Can transport a wide variety of mono- and dicarboxylates of the form X-CR(2)-COO(-), where X represents OH (2-hydroxy acid), O (2-keto acid), or H (acid) and R groups differ in size, hydrophobicity and composition. Many of the substrates are intermediates or products of amino acid metabolism, suggesting that CitP may have a broader physiological function than its role in citrate metabolism. This Lactococcus lactis subsp. lactis (Streptococcus lactis) protein is Citrate transporter CitP.